Consider the following 660-residue polypeptide: Methionine--tRNA ligase (660 aa).

The 'HIGH' region signature appears at Y15–H25. Residues K311–S315 carry the 'KMSKS' region motif. K314 is an ATP binding site. Positions L535–D554 are disordered. Positions K540 to K550 are enriched in basic and acidic residues. Residues D560–K660 enclose the tRNA-binding domain.

The protein belongs to the class-I aminoacyl-tRNA synthetase family. MetG type 2B subfamily. In terms of assembly, homodimer.

It localises to the cytoplasm. The catalysed reaction is tRNA(Met) + L-methionine + ATP = L-methionyl-tRNA(Met) + AMP + diphosphate. Is required not only for elongation of protein synthesis but also for the initiation of all mRNA translation through initiator tRNA(fMet) aminoacylation. This is Methionine--tRNA ligase (metG) from Halalkalibacterium halodurans (strain ATCC BAA-125 / DSM 18197 / FERM 7344 / JCM 9153 / C-125) (Bacillus halodurans).